The primary structure comprises 366 residues: Glycine betaine monooxygenase reductase subunit (366 aa).

An FAD-binding FR-type domain is found at 16-119 (NGRHLVRCVK…HGPVGLFNAI (104 aa)). Positions 282-366 (HQVEFTATGK…VPKGDVVIDY (85 aa)) constitute a 2Fe-2S ferredoxin-type domain. Cysteine 316, cysteine 321, cysteine 324, and cysteine 354 together coordinate [2Fe-2S] cluster.

It in the N-terminal section; belongs to the FAD-binding oxidoreductase type 6 family. As to quaternary structure, the system is composed of an oxygenase subunit (GbcA) and a reductase subunit (GbcB). It depends on FAD as a cofactor. The cofactor is [2Fe-2S] cluster.

The catalysed reaction is glycine betaine + NADH + O2 + H(+) = N,N-dimethylglycine + formaldehyde + NAD(+) + H2O. Its function is as follows. Involved in degradation of glycine betaine. Part of a Rieske-type oxygenase system that catalyzes the conversion of glycine betaine (GB) to dimethylglycine (DMG). This subunit is the ferredoxin reductase component of the system. Required for growth on choline and GB, but not for growth on DMG. This Pseudomonas aeruginosa (strain ATCC 15692 / DSM 22644 / CIP 104116 / JCM 14847 / LMG 12228 / 1C / PRS 101 / PAO1) protein is Glycine betaine monooxygenase reductase subunit.